The following is a 76-amino-acid chain: Conotoxin VnMEKL-021 (76 aa).

The signal sequence occupies residues 1 to 19; that stretch reads MQKLTILLLVAAVLMSTQA. Residues 20-37 constitute a propeptide that is removed on maturation; that stretch reads LIKGGGEKRPKEKIKFLS. Disulfide bonds link Cys51–Cys65, Cys58–Cys69, and Cys64–Cys73.

This sequence belongs to the conotoxin O2 superfamily. In terms of tissue distribution, expressed by the venom duct.

The protein localises to the secreted. The protein is Conotoxin VnMEKL-021 of Conus ventricosus (Mediterranean cone).